The primary structure comprises 161 residues: Cyclic pyranopterin monophosphate synthase (161 aa).

Residues 75 to 77 and 113 to 114 each bind substrate; these read LCH and ME. Residue aspartate 128 is part of the active site.

It belongs to the MoaC family. As to quaternary structure, homohexamer; trimer of dimers.

The enzyme catalyses (8S)-3',8-cyclo-7,8-dihydroguanosine 5'-triphosphate = cyclic pyranopterin phosphate + diphosphate. It participates in cofactor biosynthesis; molybdopterin biosynthesis. Catalyzes the conversion of (8S)-3',8-cyclo-7,8-dihydroguanosine 5'-triphosphate to cyclic pyranopterin monophosphate (cPMP). This chain is Cyclic pyranopterin monophosphate synthase, found in Methylobacillus flagellatus (strain ATCC 51484 / DSM 6875 / VKM B-1610 / KT).